The sequence spans 695 residues: Centrosomal protein of 89 kDa (695 aa).

3 disordered regions span residues 24–54, 66–147, and 167–272; these read LIPA…RPRS, TGRT…GDED, and AVPL…SEVL. Residues 34-49 are compositionally biased toward pro residues; it reads PAVPRTPPPRSPNPSP. 2 stretches are compositionally biased toward acidic residues: residues 124–146 and 178–189; these read DEDD…EGDE and DSDVDEETEDSA. Over residues 209 to 226 the composition is skewed to polar residues; the sequence is GQTQPSSLPQPRSVSRRS. The span at 251 to 271 shows a compositional bias: basic and acidic residues; that stretch reads TNKESPVRVNERDRSSEDSEV. 2 coiled-coil regions span residues 276 to 368 and 406 to 632; these read LEVQ…RYQA and AYED…LEKE.

It localises to the cytoplasm. It is found in the cytosol. The protein localises to the cytoskeleton. The protein resides in the microtubule organizing center. Its subcellular location is the centrosome. It localises to the spindle pole. It is found in the centriole. The protein localises to the mitochondrion intermembrane space. Required for ciliogenesis. Also plays a role in mitochondrial metabolism where it may modulate complex IV activity. This chain is Centrosomal protein of 89 kDa (cep89), found in Danio rerio (Zebrafish).